The primary structure comprises 101 residues: Phosphoprotein OPG062 (101 aa).

The disordered stretch occupies residues 51-73 (PSSPACERRPSSPSRCERMNNPR). 2 positions are modified to phosphoserine: S53 and S62. A compositionally biased stretch (basic and acidic residues) spans 56–70 (CERRPSSPSRCERMN).

This sequence belongs to the orthopoxvirus OPG062 family. As to quaternary structure, self-associates to form high molecular-weight forms. Interacts with protein OPG157/A30. Interacts with host RICTOR and RPTOR; these interactions disrupt the mTORC1 and mTORC2 crosstalk. Phosphorylated on two serines. While these phosphorylations do not play a role in virion assembly; they are essential for the interaction with host RICTOR and RPTOR.

Its subcellular location is the virion. Plays an essential role in virion assembly and morphogenesis. Also plays a role in the inhibition of host immune response by dysregulating mTOR. Sequesters host RICTOR and RPTOR, thereby disrupting mTORC1 and mTORC2 crosstalk. In turn, blocks the host antiviral response in part through mTOR-dependent degradation of cGAS, the primary poxvirus sensor. The sequence is that of Phosphoprotein OPG062 (OPG062) from Vaccinia virus (strain Western Reserve) (VACV).